Consider the following 397-residue polypeptide: N-acetyllactosaminide beta-1,3-N-acetylglucosaminyltransferase 2 (397 aa).

At 1–7 the chain is on the cytoplasmic side; that stretch reads MSVGRRR. The chain crosses the membrane as a helical; Signal-anchor for type II membrane protein span at residues 8-28; sequence IKLLGILMMANVFIYFIMEVS. Topologically, residues 29–397 are lumenal; it reads KSSSQEKNGK…SQLQSAHLKC (369 aa). Residues asparagine 79, asparagine 89, asparagine 127, asparagine 173, and asparagine 219 are each glycosylated (N-linked (GlcNAc...) asparagine).

This sequence belongs to the glycosyltransferase 31 family. Interacts with B3GNT8; this interaction greatly increases B3GNT2 catalytic activity, independently of B3GNT8 enzymatic activity. Requires Mn(2+) as cofactor. As to expression, ubiquitous.

It is found in the golgi apparatus membrane. It catalyses the reaction a beta-D-galactosyl-(1-&gt;4)-N-acetyl-beta-D-glucosaminyl derivative + UDP-N-acetyl-alpha-D-glucosamine = an N-acetyl-beta-D-glucosaminyl-(1-&gt;3)-beta-D-galactosyl-(1-&gt;4)-N-acetyl-beta-D-glucosaminyl derivative + UDP + H(+). It functions in the pathway protein modification; protein glycosylation. Functionally, beta-1,3-N-acetylglucosaminyltransferase involved in the synthesis of poly-N-acetyllactosamine. Catalyzes the initiation and elongation of poly-N-acetyllactosamine chains. Shows a marked preference for Gal(beta1-4)Glc(NAc)-based acceptors. Probably constitutes the main polylactosamine synthase. The sequence is that of N-acetyllactosaminide beta-1,3-N-acetylglucosaminyltransferase 2 (B3GNT2) from Homo sapiens (Human).